Reading from the N-terminus, the 265-residue chain is Undecaprenyl-diphosphatase 1 (265 aa).

A run of 7 helical transmembrane segments spans residues 4–24 (IIIAFILGIVEGLAEFLPISS), 42–62 (AKTFEIVIQLGAILAIAILYH), 84–104 (FHVFLGVFPAVVAGLLLHDVI), 108–128 (LFQPYTVVIGLVAGAILMIFA), 184–204 (SEFSFLIALPVMVGATGLDLL), 217–237 (MFAVGFITSFIVAMLAVVTFL), and 245–265 (LKPFAYYRILLAILFTVFVLL).

The protein belongs to the UppP family.

It localises to the cell membrane. The enzyme catalyses di-trans,octa-cis-undecaprenyl diphosphate + H2O = di-trans,octa-cis-undecaprenyl phosphate + phosphate + H(+). In terms of biological role, catalyzes the dephosphorylation of undecaprenyl diphosphate (UPP). Confers resistance to bacitracin. The polypeptide is Undecaprenyl-diphosphatase 1 (Bacillus thuringiensis (strain Al Hakam)).